The following is a 139-amino-acid chain: Cystatin-1 (139 aa).

The signal sequence occupies residues 1-22 (MHSRLPVPASLCLLLLLPSVLP). The Cystatin domain maps to 27–127 (GGLSPRDVTD…CHFEVWSRPW (101 aa)). The Secondary area of contact motif lies at 71–75 (QVVSG). 2 disulfides stabilise this stretch: cysteine 89–cysteine 105 and cysteine 118–cysteine 138.

The protein belongs to the cystatin family. In terms of tissue distribution, expressed by the venom gland.

Its subcellular location is the secreted. Inhibits various C1 cysteine proteases including cathepsin L, papain and cathepsin B. This protein has no toxic activity and its function in the venom is unknown. It may play a role as housekeeping or regulatory protein. This Crotalus adamanteus (Eastern diamondback rattlesnake) protein is Cystatin-1.